The chain runs to 2104 residues: Phenolphthiocerol synthesis polyketide synthase type I Pks15/1 (2104 aa).

One can recognise a Ketosynthase family 3 (KS3) domain in the interval 41–464 (TEPVAVVGIG…GTNAHVILEE (424 aa)). Residues cysteine 211, histidine 346, and histidine 386 each act as for beta-ketoacyl synthase activity in the active site. The tract at residues 571–887 (TAVVFPGQGS…GQLFSTGMSV (317 aa)) is acyltransferase. Serine 662 (for acyltransferase activity) is an active-site residue. The interval 935-1057 (HALLGAVVER…GMLGVEAASS (123 aa)) is N-terminal hotdog fold. The dehydratase stretch occupies residues 935-1095 (HALLGAVVER…YAYGPGFQGL (161 aa)). In terms of domain architecture, PKS/mFAS DH spans 935–1207 (HALLGAVVER…TRAMSAAQLR (273 aa)). The active-site Proton acceptor; for dehydratase activity is the histidine 967. Residues 1069–1207 (AESVDISDGY…TRAMSAAQLR (139 aa)) are C-terminal hotdog fold. Residue aspartate 1128 is the Proton donor; for dehydratase activity of the active site. An enoylreductase region spans residues 1400–1705 (GTLEDLVIEP…QARHIGKVVL (306 aa)). NADP(+)-binding positions include 1530-1547 (VLIH…VQLA) and 1719-1734 (TVLI…AVLA). The tract at residues 1718–1899 (ATVLITGATG…SVAWGLWEQS (182 aa)) is beta-ketoacyl reductase (KR). The Carrier domain occupies 2004 to 2079 (DALVGLVCLQ…AIAEYVGRQI (76 aa)). At serine 2039 the chain carries O-(pantetheine 4'-phosphoryl)serine. Positions 2081–2104 (DSQATQAEEEKLPESDGEMVSVTA) are disordered.

The protein belongs to the thiolase-like superfamily. Beta-ketoacyl-ACP synthases family. The cofactor is pantetheine 4'-phosphate.

It catalyses the reaction a fatty acyl-[ACP] + malonyl-[ACP] + H(+) = a 3-oxoacyl-[ACP] + holo-[ACP] + CO2. The protein operates within lipid metabolism; fatty acid biosynthesis. Catalyzes the elongation by iterative transfer of p-hydroxybenzoyl group from FadD22 (pHBA-S-FAdD22) to form p-hydroxyphenylalkanoate (pHPA) intermediates during phenolphthiocerol (PPOL) biosynthesis. PPOL is an important intermediate in the biosynthesis of phenolic glycolipid (mycosid B). The protein is Phenolphthiocerol synthesis polyketide synthase type I Pks15/1 (pks15/1) of Mycobacterium marinum (strain ATCC BAA-535 / M).